Consider the following 240-residue polypeptide: Probable transcriptional regulatory protein Adeh_2184 (240 aa).

It belongs to the TACO1 family.

The protein localises to the cytoplasm. This Anaeromyxobacter dehalogenans (strain 2CP-C) protein is Probable transcriptional regulatory protein Adeh_2184.